Reading from the N-terminus, the 822-residue chain is Calpain-3 (822 aa).

The interval M1–G36 is disordered. The Calpain catalytic domain occupies L74–T418. Residues C129, H335, and N359 contribute to the active site. The interval A419–N587 is domain III. The tract at residues T588–E650 is linker. Residues I604–Q652 are disordered. Residues E623–A635 are compositionally biased toward basic and acidic residues. EF-hand domains follow at residues E650–K684, F693–K726, K723–H758, and V788–A822. The interval E651 to A822 is domain IV. Ca(2+)-binding residues include A663, D666, E668, E673, D706, D708, S710, R712, E717, D736, D738, S740, T742, E747, D801, D803, D805, and I807.

The protein belongs to the peptidase C2 family. In terms of assembly, homodimer; via EF-hand domain 4. Interacts with TTN/titin. Interacts with CMYA5; this interaction, which results in CMYA5 proteolysis, may protect CAPN3 from autolysis. Interacts with SIMC1. Interacts with UTP25; the interaction is required for CAPN3 translocation to the nucleolus. As to expression, skeletal muscle.

The protein localises to the cytoplasm. The protein resides in the nucleus. Its subcellular location is the nucleolus. The catalysed reaction is Broad endopeptidase activity.. With respect to regulation, activated by micromolar concentrations of calcium and inhibited by calpastatin. Its function is as follows. Calcium-regulated non-lysosomal thiol-protease. Proteolytically cleaves CTBP1. Mediates, with UTP25, the proteasome-independent degradation of p53/TP53. The chain is Calpain-3 (CAPN3) from Bos taurus (Bovine).